The primary structure comprises 727 residues: Prolyl endopeptidase-like (727 aa).

Active-site charge relay system residues include Ser559, Asp645, and His690.

The protein belongs to the peptidase S9A family. Homodimer. Interacts with the AP-1 complex.

The protein resides in the cytoplasm. It localises to the cytosol. Its subcellular location is the golgi apparatus. It is found in the trans-Golgi network. The protein localises to the cytoskeleton. The protein resides in the nucleus. Functionally, serine peptidase whose precise substrate specificity remains unclear. Does not cleave peptides after a arginine or lysine residue. Regulates trans-Golgi network morphology and sorting by regulating the membrane binding of the AP-1 complex. May play a role in the regulation of synaptic vesicle exocytosis. This Macaca fascicularis (Crab-eating macaque) protein is Prolyl endopeptidase-like (PREPL).